The primary structure comprises 338 residues: Tetraacyldisaccharide 4'-kinase (338 aa).

Residue 61–68 (TLGGTGKT) participates in ATP binding.

The protein belongs to the LpxK family.

The catalysed reaction is a lipid A disaccharide + ATP = a lipid IVA + ADP + H(+). The protein operates within glycolipid biosynthesis; lipid IV(A) biosynthesis; lipid IV(A) from (3R)-3-hydroxytetradecanoyl-[acyl-carrier-protein] and UDP-N-acetyl-alpha-D-glucosamine: step 6/6. In terms of biological role, transfers the gamma-phosphate of ATP to the 4'-position of a tetraacyldisaccharide 1-phosphate intermediate (termed DS-1-P) to form tetraacyldisaccharide 1,4'-bis-phosphate (lipid IVA). This is Tetraacyldisaccharide 4'-kinase from Nitrosococcus oceani (strain ATCC 19707 / BCRC 17464 / JCM 30415 / NCIMB 11848 / C-107).